Consider the following 78-residue polypeptide: UPF0335 protein RPR_04100 (78 aa).

Belongs to the UPF0335 family.

The polypeptide is UPF0335 protein RPR_04100 (Rickettsia peacockii (strain Rustic)).